Reading from the N-terminus, the 616-residue chain is Glutamine--fructose-6-phosphate aminotransferase [isomerizing] (616 aa).

C2 (nucleophile; for GATase activity) is an active-site residue. The region spanning 2 to 222 is the Glutamine amidotransferase type-2 domain; it reads CGIIGYSGPR…QERIVALSGD (221 aa). Residues 70–89 form a disordered region; that stretch reads TGIGHTRWATHGEPSDRNAH. SIS domains follow at residues 289-428 and 461-606; these read IRDD…LRGF and LAHW…VDRP. K611 serves as the catalytic For Fru-6P isomerization activity.

In terms of assembly, homodimer.

It localises to the cytoplasm. The catalysed reaction is D-fructose 6-phosphate + L-glutamine = D-glucosamine 6-phosphate + L-glutamate. Catalyzes the first step in hexosamine metabolism, converting fructose-6P into glucosamine-6P using glutamine as a nitrogen source. The chain is Glutamine--fructose-6-phosphate aminotransferase [isomerizing] from Tropheryma whipplei (strain TW08/27) (Whipple's bacillus).